Reading from the N-terminus, the 366-residue chain is Putative integrase/recombinase HI_1572 (366 aa).

The Core-binding (CB) domain occupies 54–133 (ITLDELIDKY…SLSALMAKTI (80 aa)). One can recognise a Tyr recombinase domain in the interval 168 to 331 (IFVSGYDVEH…DMAEGYKTKA (164 aa)). Residues R201, K226, and H308 contribute to the active site. Residue Y318 is the O-(3'-phospho-DNA)-tyrosine intermediate of the active site.

This sequence belongs to the 'phage' integrase family.

The sequence is that of Putative integrase/recombinase HI_1572 from Haemophilus influenzae (strain ATCC 51907 / DSM 11121 / KW20 / Rd).